The following is a 61-amino-acid chain: Small ribosomal subunit protein uS14 (61 aa).

Residues cysteine 24, cysteine 27, cysteine 40, and cysteine 43 each coordinate Zn(2+).

Belongs to the universal ribosomal protein uS14 family. Zinc-binding uS14 subfamily. Part of the 30S ribosomal subunit. Contacts proteins S3 and S10. Zn(2+) is required as a cofactor.

In terms of biological role, binds 16S rRNA, required for the assembly of 30S particles and may also be responsible for determining the conformation of the 16S rRNA at the A site. This is Small ribosomal subunit protein uS14 from Alkaliphilus oremlandii (strain OhILAs) (Clostridium oremlandii (strain OhILAs)).